Here is a 375-residue protein sequence, read N- to C-terminus: Alpha-2,8-sialyltransferase 8B (375 aa).

Residues 1 to 6 (MQLQFR) are Cytoplasmic-facing. Residues 7 to 23 (SWMLAALTLLVVFLIFA) traverse the membrane as a helical; Signal-anchor for type II membrane protein segment. Over 24–375 (DISEIEEEIG…LTVGQCDGAT (352 aa)) the chain is Lumenal. N-linked (GlcNAc...) asparagine glycosylation is found at Asn60, Asn72, Asn89, and Asn134. 2 cysteine pairs are disulfide-bonded: Cys157–Cys307 and Cys171–Cys371. Residues Asn162 and Asn185 each coordinate CMP-N-acetyl-beta-neuraminate. Residues Asn219 and Asn234 are each glycosylated (N-linked (GlcNAc...) asparagine). The CMP-N-acetyl-beta-neuraminate site is built by Thr294, Thr295, Gly296, Trp316, Tyr329, and His330. His346 serves as the catalytic Proton donor/acceptor.

The protein belongs to the glycosyltransferase 29 family. In terms of processing, autopolysialylated. Autopolysialylation is not a prerequisite for the polysialylation acitity, but enhances the polysialylation acitity. In terms of tissue distribution, expressed only in newborn brain.

Its subcellular location is the golgi apparatus membrane. It localises to the secreted. It is found in the cell membrane. The enzyme catalyses [N-acetyl-alpha-D-neuraminosyl-(2-&gt;8)](n) + CMP-N-acetyl-beta-neuraminate = [N-acetyl-alpha-D-neuraminosyl-(2-&gt;8)](n+1) + CMP + H(+). The protein operates within protein modification; protein glycosylation. Functionally, catalyzes the transfer of a sialic acid from a CMP-linked sialic acid donor onto a terminal alpha-2,3-, alpha-2,6-, or alpha-2,8-linked sialic acid of an N-linked glycan acceptor through alpha-2,8-linkages. Therefore, participates in polysialic acid synthesis on various sialylated N-acetyllactosaminyl oligosaccharides (alpha-2,3-, alpha-2,6-, or alpha-2,8-linked sialic acid), including NCAM1, NCAM1 N-glycans, FETUB N-glycans, and to a lesser extent sialylparagloboside (SPG) and AHSG, which does not require the initial addition of an alpha 2,8-sialic acid. However, does not exhibit sialic acid-polymerase activity. Catalyzes polysialic acid synthesis in the hippocampal on NCAM1 and supports neurite outgrowth. ST8SIA2-mediated polysialylation influences on oligodendrocyte differentiation and may promote the integrity of myelin and axons. This is Alpha-2,8-sialyltransferase 8B from Rattus norvegicus (Rat).